We begin with the raw amino-acid sequence, 300 residues long: Acetylglutamate kinase (300 aa).

Substrate is bound by residues glycine 68–glycine 69, arginine 90, and asparagine 194.

It belongs to the acetylglutamate kinase family. ArgB subfamily.

Its subcellular location is the cytoplasm. The enzyme catalyses N-acetyl-L-glutamate + ATP = N-acetyl-L-glutamyl 5-phosphate + ADP. The protein operates within amino-acid biosynthesis; L-arginine biosynthesis; N(2)-acetyl-L-ornithine from L-glutamate: step 2/4. Functionally, catalyzes the ATP-dependent phosphorylation of N-acetyl-L-glutamate. The chain is Acetylglutamate kinase from Methanocella arvoryzae (strain DSM 22066 / NBRC 105507 / MRE50).